A 78-amino-acid polypeptide reads, in one-letter code: Acyl carrier protein (78 aa).

Residues 2-77 enclose the Carrier domain; sequence QNIEKKIKKI…SIFDIIKKYV (76 aa). S37 bears the O-(pantetheine 4'-phosphoryl)serine mark.

The protein belongs to the acyl carrier protein (ACP) family. 4'-phosphopantetheine is transferred from CoA to a specific serine of apo-ACP by AcpS. This modification is essential for activity because fatty acids are bound in thioester linkage to the sulfhydryl of the prosthetic group.

It is found in the cytoplasm. Its pathway is lipid metabolism; fatty acid biosynthesis. Functionally, carrier of the growing fatty acid chain in fatty acid biosynthesis. This is Acyl carrier protein from Buchnera aphidicola subsp. Baizongia pistaciae (strain Bp).